A 99-amino-acid chain; its full sequence is Nucleoid-associated protein LCABL_24440 (99 aa).

This sequence belongs to the YbaB/EbfC family. In terms of assembly, homodimer.

It is found in the cytoplasm. The protein localises to the nucleoid. Its function is as follows. Binds to DNA and alters its conformation. May be involved in regulation of gene expression, nucleoid organization and DNA protection. The polypeptide is Nucleoid-associated protein LCABL_24440 (Lacticaseibacillus casei (strain BL23) (Lactobacillus casei)).